Reading from the N-terminus, the 534-residue chain is Lysophosphatidylcholine acyltransferase 1 (534 aa).

A disordered region spans residues 1–25; the sequence is MRLRGRGPRAAPSSSSGAGDARRLA. Residues 1–57 lie on the Cytoplasmic side of the membrane; the sequence is MRLRGRGPRAAPSSSSGAGDARRLAPPGRNPFVHELRLSALQKAQVAFMTLTLFPIR. The span at 8-19 shows a compositional bias: low complexity; the sequence is PRAAPSSSSGAG. A helical; Signal-anchor for type II membrane protein membrane pass occupies residues 58–78; the sequence is LLFAAFMMLLAWPFALVASLG. Residues 79 to 534 lie on the Lumenal side of the membrane; it reads PPDKEPEQPL…GRKNSCKKVD (456 aa). Residues 135-140 carry the HXXXXD motif motif; it reads HSSYFD. EF-hand domains are found at residues 379 to 414 and 451 to 486; these read PVSD…VCRP and ISEL…YPDF. Ca(2+) is bound by residues Asp392, Ser394, Glu398, and Glu403. Residues 531–534 carry the Di-lysine motif motif; that stretch reads KKVD.

The protein belongs to the 1-acyl-sn-glycerol-3-phosphate acyltransferase family. Enriched in alveolar type II cells of lung. Also highly expressed in stomach.

The protein resides in the endoplasmic reticulum membrane. It localises to the golgi apparatus membrane. Its subcellular location is the cell membrane. The protein localises to the lipid droplet. The enzyme catalyses a 1-acyl-sn-glycero-3-phosphocholine + an acyl-CoA = a 1,2-diacyl-sn-glycero-3-phosphocholine + CoA. It catalyses the reaction a 1-O-alkyl-sn-glycero-3-phosphocholine + acetyl-CoA = a 1-O-alkyl-2-acetyl-sn-glycero-3-phosphocholine + CoA. The catalysed reaction is a 1-acyl-sn-glycero-3-phosphate + an acyl-CoA = a 1,2-diacyl-sn-glycero-3-phosphate + CoA. It carries out the reaction a 1-O-(1Z-alkenyl)-sn-glycero-3-phosphocholine + an acyl-CoA = a 1-O-(1Z-alkenyl)-2-acyl-sn-glycero-3-phosphocholine + CoA. The enzyme catalyses 1-acyl-sn-glycero-3-phospho-(1'-sn-glycerol) + an acyl-CoA = a 1,2-diacyl-sn-glycero-3-phospho-(1'-sn-glycerol) + CoA. It catalyses the reaction a 1-acyl-sn-glycero-3-phosphocholine + hexadecanoyl-CoA = 1-acyl-2-hexadecanoyl-sn-glycero-3-phosphocholine + CoA. The catalysed reaction is a 1-acyl-sn-glycero-3-phosphate + hexadecanoyl-CoA = 1-acyl-2-hexadecanoyl-sn-glycero-3-phosphate + CoA. It carries out the reaction 1-acyl-sn-glycero-3-phospho-(1'-sn-glycerol) + hexadecanoyl-CoA = 1-acyl-2-hexadecanoyl-sn-glycero-3-phospho-(1'-sn-glycerol) + CoA. The enzyme catalyses 1-hexadecanoyl-sn-glycero-3-phosphocholine + hexadecanoyl-CoA = 1,2-dihexadecanoyl-sn-glycero-3-phosphocholine + CoA. It catalyses the reaction 1-O-hexadecyl-sn-glycero-3-phosphocholine + hexadecanoyl-CoA = 1-O-hexadecyl-2-hexadecanoyl-sn-glycero-3-phosphocholine + CoA. The catalysed reaction is a 1-O-(1Z-alkenyl)-sn-glycero-3-phosphocholine + hexadecanoyl-CoA = 1-O-(1Z)-alkenyl-2-hexadecanoyl-sn-glycero-3-phosphocholine + CoA. It carries out the reaction 1-hexadecanoyl-sn-glycero-3-phospho-(1'-sn-glycerol) + hexadecanoyl-CoA = 1,2-dihexadecanoyl-sn-glycero-3-phospho-(1'-sn-glycerol) + CoA. The enzyme catalyses 1-dodecanoyl-sn-glycero-3-phosphocholine + hexadecanoyl-CoA = 1-dodecanoyl-2-hexadecanoyl-sn-glycero-3-phosphocholine + CoA. It catalyses the reaction 1-tetradecanoyl-sn-glycero-3-phosphocholine + hexadecanoyl-CoA = 1-tetradecanoyl-2-hexadecanoyl-sn-glycero-3-phosphocholine + CoA. The catalysed reaction is 1-O-octadecyl-sn-glycero-3-phosphocholine + hexadecanoyl-CoA = 1-O-octadecyl-2-hexadecanoyl-sn-glycero-3-phosphocholine + CoA. It carries out the reaction 1-octadecanoyl-sn-glycero-3-phosphocholine + hexadecanoyl-CoA = 1-octadecanoyl-2-hexadecanoyl-sn-glycero-3-phosphocholine + CoA. The enzyme catalyses 1-(9Z-octadecenoyl)-sn-glycero-3-phosphocholine + hexadecanoyl-CoA = 1-(9Z-octadecenoyl)-2-hexadecanoyl-sn-glycero-3-phosphocholine + CoA. It catalyses the reaction 1-eicosanoyl-sn-glycero-3-phosphocholine + hexadecanoyl-CoA = 1-eicosanoyl-2-hexadecanoyl-sn-glycero-3-phosphocholine + CoA. The catalysed reaction is hexanoyl-CoA + 1-hexadecanoyl-sn-glycero-3-phosphocholine = 1-hexadecanoyl-2-hexanoyl-sn-glycero-3-phosphocholine + CoA. It carries out the reaction octanoyl-CoA + 1-hexadecanoyl-sn-glycero-3-phosphocholine = 1-hexadecanoyl-2-octanoyl-sn-glycero-3-phosphocholine + CoA. The enzyme catalyses decanoyl-CoA + 1-hexadecanoyl-sn-glycero-3-phosphocholine = 1-hexadecanoyl-2-decanoyl-sn-glycero-3-phosphocholine + CoA. It catalyses the reaction dodecanoyl-CoA + 1-hexadecanoyl-sn-glycero-3-phosphocholine = 1-hexadecanoyl-2-dodecanoyl-sn-glycero-3-phosphocholine + CoA. The catalysed reaction is tetradecanoyl-CoA + 1-hexadecanoyl-sn-glycero-3-phosphocholine = 1-hexadecanoyl-2-tetradecanoyl-sn-glycero-3-phosphocholine + CoA. It carries out the reaction 1-hexadecanoyl-sn-glycero-3-phosphocholine + (9Z)-octadecenoyl-CoA = 1-hexadecanoyl-2-(9Z-octadecenoyl)-sn-glycero-3-phosphocholine + CoA. The enzyme catalyses (9Z,12Z)-octadecadienoyl-CoA + 1-hexadecanoyl-sn-glycero-3-phosphocholine = 1-hexadecanoyl-2-(9Z,12Z-octadecadienoyl)-sn-glycero-3-phosphocholine + CoA. It catalyses the reaction (4Z,7Z,10Z,13Z,16Z,19Z)-docosahexaenoyl-CoA + 1-hexadecanoyl-sn-glycero-3-phosphocholine = 1-hexadecanoyl-2-(4Z,7Z,10Z,13Z,16Z,19Z-docosahexaenoyl)-sn-glycero-3-phosphocholine + CoA. The catalysed reaction is 1-hexadecanoyl-sn-glycero-3-phosphocholine + acetyl-CoA = 1-hexadecanoyl-2-acetyl-sn-glycero-3-phosphocholine + CoA. It carries out the reaction eicosanoyl-CoA + 1-hexadecanoyl-sn-glycero-3-phosphocholine = 1-hexadecanoyl-2-eicosanoyl-sn-glycero-3-phosphocholine + CoA. The enzyme catalyses 1-O-hexadecyl-sn-glycero-3-phosphocholine + acetyl-CoA = 1-O-hexadecyl-2-acetyl-sn-glycero-3-phosphocholine + CoA. It functions in the pathway lipid metabolism; phospholipid metabolism. Activity is stimulated by Mg(2+) or Mn(2+). Functionally, exhibits acyltransferase activity. Exhibits acetyltransferase activity. Activity is calcium-independent. Catalyzes the conversion of lysophosphatidylcholine (1-acyl-sn-glycero-3-phosphocholine or LPC) into phosphatidylcholine (1,2-diacyl-sn-glycero-3-phosphocholine or PC). Catalyzes the conversion 1-acyl-sn-glycerol-3-phosphate (lysophosphatidic acid or LPA) into 1,2-diacyl-sn-glycerol-3-phosphate (phosphatidic acid or PA) by incorporating an acyl moiety at the sn-2 position of the glycerol backbone. Displays a clear preference for saturated fatty acyl-CoAs, and 1-myristoyl or 1-palmitoyl LPC as acyl donors and acceptors, respectively. Involved in platelet-activating factor (PAF) biosynthesis by catalyzing the conversion of the PAF precursor, 1-O-alkyl-sn-glycero-3-phosphocholine (lyso-PAF) into 1-O-alkyl-2-acetyl-sn-glycero-3-phosphocholine (PAF). May synthesize phosphatidylcholine in pulmonary surfactant, thereby playing a pivotal role in respiratory physiology. Involved in the regulation of lipid droplet number and size. The polypeptide is Lysophosphatidylcholine acyltransferase 1 (Lpcat1) (Rattus norvegicus (Rat)).